We begin with the raw amino-acid sequence, 609 residues long: Pentatricopeptide repeat-containing protein At1g03540 (609 aa).

14 PPR repeats span residues 25 to 59, 60 to 94, 95 to 126, 127 to 161, 162 to 196, 197 to 227, 228 to 263, 264 to 298, 299 to 329, 330 to 364, 396 to 426, 427 to 461, 462 to 497, and 498 to 532; these read SAPT…EIPA, TPKL…GLET, DRNV…RFVK, DAIS…GLDA, NEFT…GFEW, NHFI…MPEP, DVIC…GLVP, DGST…GIGS, NVVV…MSKK, NSVS…DLYC, NVIV…MSIR, NMIT…GIKP, DYIS…GIKP, and GTEH…NDAS. Positions 533-609 are type E motif; the sequence is LWGVLLGPCA…TVGQSWIDAH (77 aa).

The protein belongs to the PPR family. PCMP-E subfamily.

The chain is Pentatricopeptide repeat-containing protein At1g03540 (PCMP-E4) from Arabidopsis thaliana (Mouse-ear cress).